We begin with the raw amino-acid sequence, 391 residues long: Sister chromatid cohesion protein DCC1 (391 aa).

The protein belongs to the DCC1 family. Component of the ctf18-RFC complex which consists of ctf18, ctf8, dscc1 and the RFC complex.

Its subcellular location is the nucleus. Its function is as follows. Loads pcna onto primed templates regulating velocity, spacing and restart activity of replication forks. May couple DNA replication to sister chromatid cohesion. This chain is Sister chromatid cohesion protein DCC1 (dscc1), found in Danio rerio (Zebrafish).